Reading from the N-terminus, the 227-residue chain is Cytochrome c oxidase subunit 2 (227 aa).

Over 1 to 14 (MAYPLQLGFQDASS) the chain is Mitochondrial intermembrane. A helical membrane pass occupies residues 15–45 (PIMEELLHFHDHTLMIVFLISSLVLYIISLM). The Mitochondrial matrix portion of the chain corresponds to 46-59 (LTTKLTHTSTMDAQ). A helical transmembrane segment spans residues 60–87 (EVETIWTILPAIILILIALPSLRILYMM). Topologically, residues 88–227 (DEINNPSLTV…HFENWTTTML (140 aa)) are mitochondrial intermembrane. Cu cation-binding residues include His161, Cys196, Glu198, Cys200, His204, and Met207. Glu198 is a Mg(2+) binding site.

This sequence belongs to the cytochrome c oxidase subunit 2 family. In terms of assembly, component of the cytochrome c oxidase (complex IV, CIV), a multisubunit enzyme composed of 14 subunits. The complex is composed of a catalytic core of 3 subunits MT-CO1, MT-CO2 and MT-CO3, encoded in the mitochondrial DNA, and 11 supernumerary subunits COX4I, COX5A, COX5B, COX6A, COX6B, COX6C, COX7A, COX7B, COX7C, COX8 and NDUFA4, which are encoded in the nuclear genome. The complex exists as a monomer or a dimer and forms supercomplexes (SCs) in the inner mitochondrial membrane with NADH-ubiquinone oxidoreductase (complex I, CI) and ubiquinol-cytochrome c oxidoreductase (cytochrome b-c1 complex, complex III, CIII), resulting in different assemblies (supercomplex SCI(1)III(2)IV(1) and megacomplex MCI(2)III(2)IV(2)). Found in a complex with TMEM177, COA6, COX18, COX20, SCO1 and SCO2. Interacts with TMEM177 in a COX20-dependent manner. Interacts with COX20. Interacts with COX16. Cu cation serves as cofactor.

The protein localises to the mitochondrion inner membrane. It catalyses the reaction 4 Fe(II)-[cytochrome c] + O2 + 8 H(+)(in) = 4 Fe(III)-[cytochrome c] + 2 H2O + 4 H(+)(out). In terms of biological role, component of the cytochrome c oxidase, the last enzyme in the mitochondrial electron transport chain which drives oxidative phosphorylation. The respiratory chain contains 3 multisubunit complexes succinate dehydrogenase (complex II, CII), ubiquinol-cytochrome c oxidoreductase (cytochrome b-c1 complex, complex III, CIII) and cytochrome c oxidase (complex IV, CIV), that cooperate to transfer electrons derived from NADH and succinate to molecular oxygen, creating an electrochemical gradient over the inner membrane that drives transmembrane transport and the ATP synthase. Cytochrome c oxidase is the component of the respiratory chain that catalyzes the reduction of oxygen to water. Electrons originating from reduced cytochrome c in the intermembrane space (IMS) are transferred via the dinuclear copper A center (CU(A)) of subunit 2 and heme A of subunit 1 to the active site in subunit 1, a binuclear center (BNC) formed by heme A3 and copper B (CU(B)). The BNC reduces molecular oxygen to 2 water molecules using 4 electrons from cytochrome c in the IMS and 4 protons from the mitochondrial matrix. This is Cytochrome c oxidase subunit 2 (MT-CO2) from Tupaia glis (Common tree shrew).